A 103-amino-acid polypeptide reads, in one-letter code: MAGRSEEDQQLLQAIQIIKILYQSNPCPTPAGSRNARKNRRRRWRRRQAQVDSLATRILATVVHGSQDNNLVDLPPLEQLNIRDPEADRLPGTGTVDPGTKDN.

Ser5 carries the post-translational modification Phosphoserine; by host CK2. Positions 17–25 (IIKILYQSN) are homomultimerization. Disordered regions lie at residues 24–49 (SNPC…RRQA) and 82–103 (IRDP…TKDN). The short motif at 33-49 (SRNARKNRRRRWRRRQA) is the Nuclear localization signal and RNA-binding (RRE) element. A compositionally biased stretch (basic residues) spans 35-48 (NARKNRRRRWRRRQ). The short motif at 72 to 83 (VDLPPLEQLNIR) is the Nuclear export signal and binding to XPO1 element.

The protein belongs to the HIV-1 REV protein family. In terms of assembly, homomultimer; when bound to the RRE. Multimeric assembly is essential for activity and may involve XPO1. Binds to human KPNB1, XPO1, TNPO1, RANBP5 and IPO7. Interacts with the viral Integrase. Interacts with human KHDRBS1. Interacts with human NAP1; this interaction decreases Rev multimerization and stimulates its activity. Interacts with human DEAD-box helicases DDX3 and DDX24; these interactions may serve for viral RNA export to the cytoplasm and packaging, respectively. Interacts with human PSIP1; this interaction may inhibit HIV-1 DNA integration by promoting dissociation of the Integrase-LEDGF/p75 complex. In terms of processing, asymmetrically arginine dimethylated at one site by host PRMT6. Methylation impairs the RNA-binding activity and export of viral RNA from the nucleus to the cytoplasm. Phosphorylated by protein kinase CK2. Presence of, and maybe binding to the N-terminus of the regulatory beta subunit of CK2 is necessary for CK2-mediated Rev's phosphorylation.

The protein localises to the host nucleus. It localises to the host nucleolus. The protein resides in the host cytoplasm. In terms of biological role, escorts unspliced or incompletely spliced viral pre-mRNAs (late transcripts) out of the nucleus of infected cells. These pre-mRNAs carry a recognition sequence called Rev responsive element (RRE) located in the env gene, that is not present in fully spliced viral mRNAs (early transcripts). This function is essential since most viral proteins are translated from unspliced or partially spliced pre-mRNAs which cannot exit the nucleus by the pathway used by fully processed cellular mRNAs. Rev itself is translated from a fully spliced mRNA that readily exits the nucleus. Rev's nuclear localization signal (NLS) binds directly to KPNB1/Importin beta-1 without previous binding to KPNA1/Importin alpha-1. KPNB1 binds to the GDP bound form of RAN (Ran-GDP) and targets Rev to the nucleus. In the nucleus, the conversion from Ran-GDP to Ran-GTP dissociates Rev from KPNB1 and allows Rev's binding to the RRE in viral pre-mRNAs. Rev multimerization on the RRE via cooperative assembly exposes its nuclear export signal (NES) to the surface. Rev can then form a complex with XPO1/CRM1 and Ran-GTP, leading to nuclear export of the complex. Conversion from Ran-GTP to Ran-GDP mediates dissociation of the Rev/RRE/XPO1/RAN complex, so that Rev can return to the nucleus for a subsequent round of export. Beside KPNB1, also seems to interact with TNPO1/Transportin-1, RANBP5/IPO5 and IPO7/RANBP7 for nuclear import. The nucleoporin-like HRB/RIP is an essential cofactor that probably indirectly interacts with Rev to release HIV RNAs from the perinuclear region to the cytoplasm. The protein is Protein Rev of Human immunodeficiency virus type 1 group O (isolate MVP5180) (HIV-1).